The sequence spans 298 residues: Glutamyl-Q tRNA(Asp) synthetase (298 aa).

Residues 8-12 (RFAPS) and E44 each bind L-glutamate. The short motif at 11–21 (PSPTGPLHFGS) is the 'HIGH' region element. Residues C100, C102, Y123, and C127 each contribute to the Zn(2+) site. L-glutamate contacts are provided by Y183 and R201. Positions 239–243 (KLSKQ) match the 'KMSKS' region motif. Residue K242 coordinates ATP.

The protein belongs to the class-I aminoacyl-tRNA synthetase family. GluQ subfamily. Requires Zn(2+) as cofactor.

Functionally, catalyzes the tRNA-independent activation of glutamate in presence of ATP and the subsequent transfer of glutamate onto a tRNA(Asp). Glutamate is transferred on the 2-amino-5-(4,5-dihydroxy-2-cyclopenten-1-yl) moiety of the queuosine in the wobble position of the QUC anticodon. This is Glutamyl-Q tRNA(Asp) synthetase from Burkholderia orbicola (strain MC0-3).